Here is a 399-residue protein sequence, read N- to C-terminus: Tryptophan synthase beta chain (399 aa).

Lys-92 is subject to N6-(pyridoxal phosphate)lysine.

This sequence belongs to the TrpB family. As to quaternary structure, tetramer of two alpha and two beta chains. Pyridoxal 5'-phosphate serves as cofactor.

The enzyme catalyses (1S,2R)-1-C-(indol-3-yl)glycerol 3-phosphate + L-serine = D-glyceraldehyde 3-phosphate + L-tryptophan + H2O. It functions in the pathway amino-acid biosynthesis; L-tryptophan biosynthesis; L-tryptophan from chorismate: step 5/5. Functionally, the beta subunit is responsible for the synthesis of L-tryptophan from indole and L-serine. The chain is Tryptophan synthase beta chain from Legionella pneumophila subsp. pneumophila (strain Philadelphia 1 / ATCC 33152 / DSM 7513).